Reading from the N-terminus, the 517-residue chain is Glutamate--tRNA ligase (517 aa).

Positions 14–24 (PSPTGPLHIGG) match the 'HIGH' region motif. Positions 266–270 (KLSKR) match the 'KMSKS' region motif. ATP is bound at residue Lys-269.

This sequence belongs to the class-I aminoacyl-tRNA synthetase family. Glutamate--tRNA ligase type 1 subfamily. In terms of assembly, monomer.

The protein resides in the cytoplasm. The catalysed reaction is tRNA(Glu) + L-glutamate + ATP = L-glutamyl-tRNA(Glu) + AMP + diphosphate. Functionally, catalyzes the attachment of glutamate to tRNA(Glu) in a two-step reaction: glutamate is first activated by ATP to form Glu-AMP and then transferred to the acceptor end of tRNA(Glu). This Cytophaga hutchinsonii (strain ATCC 33406 / DSM 1761 / CIP 103989 / NBRC 15051 / NCIMB 9469 / D465) protein is Glutamate--tRNA ligase.